The primary structure comprises 87 residues: Omega-lycotoxin-Am1a (87 aa).

The first 17 residues, 1-17 (MKLSIFFVLFFIAIAYC), serve as a signal peptide directing secretion. A propeptide spanning residues 18-40 (QPEFLDDEEDEVEETLPVAEEGR) is cleaved from the precursor. 4 disulfide bridges follow: C44/C59, C51/C64, C58/C84, and C66/C82.

This sequence belongs to the neurotoxin omega-lctx family. In terms of tissue distribution, expressed by the venom gland.

The protein resides in the secreted. Modulates Cav2.1/CACNA1A voltage-gated calcium channels (P/Q-type currents) in rat cerebellar Purkinje cells and hippocampal CA1-CA3 neurons. At saturating concentrations (&gt;10 nM) decelerates activation kinetics and slightly increases peak amplitude without affecting deactivation kinetics. In vivo, does not cause death when intravenously injected into mice. In rat models, through its activity on Cav2.1/CACNA1A, has an ameliorative effect on memory defects provoked by hyperstimulation of N-methyl-D-aspartate receptors (NMDARs) in the hippocampus. In Alopecosa marikovskyi (Wolf spider), this protein is Omega-lycotoxin-Am1a.